Consider the following 124-residue polypeptide: UPF0231 protein Sama_0645 (124 aa).

It belongs to the UPF0231 family.

The polypeptide is UPF0231 protein Sama_0645 (Shewanella amazonensis (strain ATCC BAA-1098 / SB2B)).